The following is a 207-amino-acid chain: Holliday junction branch migration complex subunit RuvA (207 aa).

The tract at residues 1-65 is domain I; that stretch reads MYDYIRGVLT…ETEHVLYGFH (65 aa). The interval 66–144 is domain II; that stretch reads TRGERECFRM…DLLPLDAQIL (79 aa). Residues 145–155 are flexible linker; sequence ASWEPAKPSCM. The tract at residues 155–207 is domain III; sequence MEEGIQALAALGYPKSSAERMIAEAMSELPDHASVAEILPIALKKNLQGLNKI.

This sequence belongs to the RuvA family. As to quaternary structure, homotetramer. Forms an RuvA(8)-RuvB(12)-Holliday junction (HJ) complex. HJ DNA is sandwiched between 2 RuvA tetramers; dsDNA enters through RuvA and exits via RuvB. An RuvB hexamer assembles on each DNA strand where it exits the tetramer. Each RuvB hexamer is contacted by two RuvA subunits (via domain III) on 2 adjacent RuvB subunits; this complex drives branch migration. In the full resolvosome a probable DNA-RuvA(4)-RuvB(12)-RuvC(2) complex forms which resolves the HJ.

It localises to the cytoplasm. In terms of biological role, the RuvA-RuvB-RuvC complex processes Holliday junction (HJ) DNA during genetic recombination and DNA repair, while the RuvA-RuvB complex plays an important role in the rescue of blocked DNA replication forks via replication fork reversal (RFR). RuvA specifically binds to HJ cruciform DNA, conferring on it an open structure. The RuvB hexamer acts as an ATP-dependent pump, pulling dsDNA into and through the RuvAB complex. HJ branch migration allows RuvC to scan DNA until it finds its consensus sequence, where it cleaves and resolves the cruciform DNA. The protein is Holliday junction branch migration complex subunit RuvA of Chlamydia abortus (strain DSM 27085 / S26/3) (Chlamydophila abortus).